An 83-amino-acid chain; its full sequence is Hainantoxin-III 5 (83 aa).

A signal peptide spans 1 to 21 (MKASRFLALAGLVLLFVVGYA). The propeptide occupies 22 to 48 (SESEEKEFPRELLSKIFAVDDFKGEER). 3 disulfide bridges follow: Cys50-Cys65, Cys57-Cys70, and Cys64-Cys77. Residue Leu81 is modified to Leucine amide.

Belongs to the neurotoxin 10 (Hwtx-1) family. 15 (Hntx-3) subfamily. Monomer. In terms of tissue distribution, expressed by the venom gland.

Its subcellular location is the secreted. Selective antagonist of neuronal tetrodotoxin (TTX)-sensitive voltage-gated sodium channels (IC(50)=1270 nM on Nav1.1/SCN1A, 270 nM on Nav1.2/SCN2A, 491 nM on Nav1.3/SCN3A and 232 nM on Nav1.7/SCN9A). This toxin suppress Nav1.7 current amplitude without significantly altering the activation, inactivation, and repriming kinetics. Short extreme depolarizations partially activate the toxin-bound channel, indicating voltage-dependent inhibition of this toxin. This toxin increases the deactivation of the Nav1.7 current after extreme depolarizations. The toxin-Nav1.7 complex is gradually dissociated upon prolonged strong depolarizations in a voltage-dependent manner, and the unbound toxin rebinds to Nav1.7 after a long repolarization. Moreover, analysis of chimeric channels showed that the DIIS3-S4 linker is critical for toxin binding to Nav1.7. These data are consistent with this toxin interacting with Nav1.7 site 4 and trapping the domain II voltage sensor in the closed state. The protein is Hainantoxin-III 5 of Cyriopagopus hainanus (Chinese bird spider).